Reading from the N-terminus, the 186-residue chain is Apolipophorin-3 (186 aa).

Residues 1–18 (MAAKYVFVVAACSALAQA) form the signal peptide. Positions 19-23 (GIVRR) are excised as a propeptide.

This sequence belongs to the insect apolipophorin-3 family. As to quaternary structure, equilibrium between a soluble monomer and a bound lipoprotein form. Apolipophorin-3 associates with lipophorin during lipid loading until each particle contains 9 or 14 molecules of apolipophorin-3. As to expression, expressed in hemolymph. Also found in hemocytes and fat body.

It is found in the secreted. Functionally, assists in the loading of diacylglycerol, generated from triacylglycerol stores in the fat body through the action of adipokinetic hormone, into lipophorin, the hemolymph lipoprotein. It increases the lipid carrying capacity of lipophorin by covering the expanding hydrophobic surface resulting from diacylglycerol uptake. It thus plays a critical role in the transport of lipids during flight in several species of insects. Has antibacterial activity against the Gram-positive bacteria L.monocytogenes (MIC=6.5 uM). Lacks antibacterial activity against the Gram-positive bacteria B.circulans, M.luteus, S.aureus, and S.lutea, and the Gram-negative bacteria E.coli D31, E.coli ATCC 25922, and S.typhimurium. Lacks antifungal activity against S.cerevisiae, P.pastoris, Z.marxianus, C.albicans, C.wickerhamii, A.niger, F.oxysporum, and T.harizianum. This is Apolipophorin-3 from Galleria mellonella (Greater wax moth).